Reading from the N-terminus, the 289-residue chain is Bis(5'-nucleosyl)-tetraphosphatase, symmetrical (289 aa).

Belongs to the Ap4A hydrolase family.

It carries out the reaction P(1),P(4)-bis(5'-adenosyl) tetraphosphate + H2O = 2 ADP + 2 H(+). Its function is as follows. Hydrolyzes diadenosine 5',5'''-P1,P4-tetraphosphate to yield ADP. The chain is Bis(5'-nucleosyl)-tetraphosphatase, symmetrical from Yersinia pseudotuberculosis serotype IB (strain PB1/+).